Here is a 939-residue protein sequence, read N- to C-terminus: Isoleucine--tRNA ligase (939 aa).

Residues 57–67 (PYANGEIHIGH) carry the 'HIGH' region motif. Glu-563 contributes to the L-isoleucyl-5'-AMP binding site. The short motif at 604 to 608 (KMSKS) is the 'KMSKS' region element. Lys-607 provides a ligand contact to ATP. Residues Cys-902, Cys-905, Cys-922, and Cys-925 each coordinate Zn(2+).

It belongs to the class-I aminoacyl-tRNA synthetase family. IleS type 1 subfamily. Monomer. The cofactor is Zn(2+).

It is found in the cytoplasm. It catalyses the reaction tRNA(Ile) + L-isoleucine + ATP = L-isoleucyl-tRNA(Ile) + AMP + diphosphate. Catalyzes the attachment of isoleucine to tRNA(Ile). As IleRS can inadvertently accommodate and process structurally similar amino acids such as valine, to avoid such errors it has two additional distinct tRNA(Ile)-dependent editing activities. One activity is designated as 'pretransfer' editing and involves the hydrolysis of activated Val-AMP. The other activity is designated 'posttransfer' editing and involves deacylation of mischarged Val-tRNA(Ile). The protein is Isoleucine--tRNA ligase of Methylococcus capsulatus (strain ATCC 33009 / NCIMB 11132 / Bath).